Here is a 151-residue protein sequence, read N- to C-terminus: uncharacterized protein (151 aa).

The segment at 1-151 (MAELASIIRP…SSKTTTLKAR (151 aa)) is disordered. Residues 33-45 (STGLSDLLMLLQS) show a composition bias toward low complexity. Residues 53–64 (RARRRTVCRPRR) are compositionally biased toward basic residues. A compositionally biased stretch (low complexity) spans 108 to 123 (SSSSNTSSGTATSGES). Over residues 126-141 (ADWRDSSSASDDDRIP) the composition is skewed to basic and acidic residues.

This is an uncharacterized protein from Aotus trivirgatus (Three-striped night monkey).